The chain runs to 534 residues: UDP-glucuronosyltransferase 1A3 (534 aa).

The signal sequence occupies residues 1–28 (MATGLQVPLPWLATGLLLLLSVQPWAES). N-linked (GlcNAc...) asparagine glycans are attached at residues N119, N142, N296, and N348. Residues 492 to 508 (VIGFLLAVVLTVAFITF) form a helical membrane-spanning segment.

This sequence belongs to the UDP-glycosyltransferase family. Homodimer. Homooligomer. Interacts with UGT1A1, UGT1A4, UGT1A6, UGT1A7, UGT1A8, UGT1A9 and UGT1A10 to form heterodimers. Isoform 1 interacts with isoform 2/i2 suggesting that oligomerization is involved in negative regulation of transferase activity by isoform 2. Isoform 1 also interacts with respective i2 isoforms of UGT1A1, UGT1A4, UGT1A6, UGT1A7, UGT1A8, UGT1A9 and UGT1A10. As to expression, expressed in liver, kidney, colon, esophagus and small intestine. In terms of tissue distribution, expressed in liver, kidney and colon. Not expressed in esophagus and small intestine.

Its subcellular location is the endoplasmic reticulum membrane. It catalyses the reaction glucuronate acceptor + UDP-alpha-D-glucuronate = acceptor beta-D-glucuronoside + UDP + H(+). The catalysed reaction is 17beta-estradiol + UDP-alpha-D-glucuronate = 17beta-estradiol 3-O-(beta-D-glucuronate) + UDP + H(+). The enzyme catalyses 17beta-estradiol + UDP-alpha-D-glucuronate = 17beta-estradiol 17-O-(beta-D-glucuronate) + UDP + H(+). It carries out the reaction 17alpha-estradiol + UDP-alpha-D-glucuronate = 17alpha-estradiol 3-O-(beta-D-glucuronate) + UDP + H(+). It catalyses the reaction estrone + UDP-alpha-D-glucuronate = estrone 3-O-(beta-D-glucuronate) + UDP + H(+). The catalysed reaction is chenodeoxycholate + UDP-alpha-D-glucuronate = chenodeoxycholoyl-24-O-(beta-D-glucuronate) + UDP. The enzyme catalyses deoxycholate + UDP-alpha-D-glucuronate = deoxycholoyl-24-O-(beta-D-glucuronate) + UDP. It carries out the reaction lithocholate + UDP-alpha-D-glucuronate = lithocholoyl-24-O-(beta-D-glucuronate) + UDP. It catalyses the reaction hyodeoxycholate + UDP-alpha-D-glucuronate = hyodeoxycholoyl-24-O-(beta-D-glucuronate) + UDP. The catalysed reaction is hyocholate + UDP-alpha-D-glucuronate = hyocholoyl-24-O-(beta-D-glucuronate) + UDP. The enzyme catalyses calcidiol + UDP-alpha-D-glucuronate = calcidiol 25-O-(beta-D-glucuronide) + UDP + H(+). It carries out the reaction (E)-ferulate + UDP-alpha-D-glucuronate = (E)-4-O-(beta-D-glucuronosyl)-ferulate + UDP + H(+). It catalyses the reaction (E)-ferulate + UDP-alpha-D-glucuronate = (E)-ferulic acid beta-D-glucuronate ester + UDP. The catalysed reaction is losartan + UDP-alpha-D-glucuronate = losartan-2-N-beta-D-glucuronide + UDP. The enzyme catalyses candesartan + UDP-alpha-D-glucuronate = candesartan-2-N-beta-D-glucuronide + UDP. It carries out the reaction zolasartan + UDP-alpha-D-glucuronate = zolarsartan-2-N-beta-D-glucuronide + UDP. UDP-glucuronosyltransferase (UGT) that catalyzes phase II biotransformation reactions in which lipophilic substrates are conjugated with glucuronic acid to increase the metabolite's water solubility, thereby facilitating excretion into either the urine or bile. Essential for the elimination and detoxification of drugs, xenobiotics and endogenous compounds. Catalyzes the glucuronidation of endogenous estrogen hormones such as estradiol and estrone. Contributes to bile acid (BA) detoxification by catalyzing the glucuronidation of BA substrates, which are natural detergents for dietary lipids absorption. Involved in the glucuronidation of calcidiol, which is the major circulating form of vitamin D3, essential for the regulation of calcium and phosphate homeostasis. Involved in the glucuronidation of the phytochemical ferulic acid at the phenolic or the carboxylic acid group. Involved in the glucuronidation of the AGTR1 angiotensin receptor antagonists losartan, candesartan and zolarsartan, which can inhibit the effect of angiotensin II. Its function is as follows. Lacks UDP-glucuronosyltransferase (UGT) activity but acts as a negative regulator of isoform 1. This chain is UDP-glucuronosyltransferase 1A3, found in Homo sapiens (Human).